The following is an 865-amino-acid chain: Leucine--tRNA ligase (865 aa).

The short motif at 58 to 68 (PYPSGNLHMGH) is the 'HIGH' region element. A 'KMSKS' region motif is present at residues 629 to 633 (KMSKS). Position 632 (Lys-632) interacts with ATP.

Belongs to the class-I aminoacyl-tRNA synthetase family.

Its subcellular location is the cytoplasm. The enzyme catalyses tRNA(Leu) + L-leucine + ATP = L-leucyl-tRNA(Leu) + AMP + diphosphate. The sequence is that of Leucine--tRNA ligase from Synechococcus sp. (strain ATCC 27144 / PCC 6301 / SAUG 1402/1) (Anacystis nidulans).